A 488-amino-acid polypeptide reads, in one-letter code: Protein Notchless (488 aa).

The interval 1–22 (MLAKKQKMQETDTEQEATPHTI) is disordered. Residues 19–101 (PHTIQARLVS…VIDIVYQPQA (83 aa)) are ubiquitin-like (UBL) domain. 8 WD repeats span residues 117–156 (GHAE…PHFT), 159–198 (GHKQ…QKGR), 202–246 (GHKK…CLMN), 249–287 (GHTN…LCRT), 329–370 (LQES…CVER), 373–412 (GHQN…YMAT), 415–454 (GHVQ…LAQE), and 457–488 (GHAD…LWAY).

It belongs to the NLE1/RSA4 family. In terms of assembly, interacts with Notch (via cytoplasmic domain). Associates with the pre-60S ribosomal particle.

The protein resides in the nucleus. Its subcellular location is the nucleolus. Functionally, plays a role in regulating Notch activity. The polypeptide is Protein Notchless (Drosophila melanogaster (Fruit fly)).